The primary structure comprises 199 residues: GTP cyclohydrolase-2 (199 aa).

Residue 52–56 (RMHSE) coordinates GTP. C57, C68, and C70 together coordinate Zn(2+). GTP-binding positions include Q73, 94–96 (EGR), and T116. D128 functions as the Proton acceptor in the catalytic mechanism. R130 (nucleophile) is an active-site residue. T151 and K156 together coordinate GTP.

This sequence belongs to the GTP cyclohydrolase II family. The cofactor is Zn(2+).

It carries out the reaction GTP + 4 H2O = 2,5-diamino-6-hydroxy-4-(5-phosphoribosylamino)-pyrimidine + formate + 2 phosphate + 3 H(+). The protein operates within cofactor biosynthesis; riboflavin biosynthesis; 5-amino-6-(D-ribitylamino)uracil from GTP: step 1/4. Functionally, catalyzes the conversion of GTP to 2,5-diamino-6-ribosylamino-4(3H)-pyrimidinone 5'-phosphate (DARP), formate and pyrophosphate. The protein is GTP cyclohydrolase-2 of Aliivibrio salmonicida (strain LFI1238) (Vibrio salmonicida (strain LFI1238)).